The chain runs to 382 residues: MASNQHIGASNLNENEAILTNRVAELERRMSMFEGIFHALSNRLDLHFKKYDVVVNSQQQQINELTAFLSTLLNDQQRHAEILSEKLSGTLHGVSATSISLSQTLDPQGFTDGTTAPGAPRNYTSVPMNNDQTAHPQNEGAVSNETLFEDILNGNSQENDKSQQQTNSSNSISQENNSTNPSVDTRFNKPQNYNSNLVPSLEEYSANPPNNDGGQSQGLYISSNSSQSRQSPNLQKVSPNHENAVESNAQESVPTFEEEQYETKTGLKRKRIVCTRPFEFIKSPHSVMEVWKEYTEGVNGQPSIRKMEALYQTAWRRDPAVNKRYSRRKVLWKAIQTGLNRGYSLNYVVEILENSRYVNDKQKVKQPIGWLCHSSHIPETLK.

A leucine-zipper region spans residues 12–26; it reads LNENEAILTNRVAEL. Composition is skewed to polar residues over residues 104–114 and 122–138; these read TLDPQGFTDGT and NYTS…HPQN. Disordered stretches follow at residues 104-138 and 155-260; these read TLDP…HPQN and NSQE…EEEQ. Residues 162-180 are compositionally biased toward low complexity; that stretch reads SQQQTNSSNSISQENNSTN. 2 stretches are compositionally biased toward polar residues: residues 181 to 198 and 207 to 221; these read PSVD…SNLV and NPPN…GLYI. A compositionally biased stretch (low complexity) spans 222–231; it reads SSNSSQSRQS. The span at 232–253 shows a compositional bias: polar residues; it reads PNLQKVSPNHENAVESNAQESV. A Nuclear localization signal motif is present at residues 266 to 271; that stretch reads GLKRKR.

It is found in the nucleus. Functionally, may function as a transcriptional activator. Increased dosage of MSN1 restores invertase expression in yeast mutants defective in the SNF1 protein kinase, and msn1 disruption reduced derepression of invertase in the wild-type. May affect SUC2 expression. Expression of MSN1 enhances growth in iron-limiting conditions. The sequence is that of Protein MSN1 (MSN1) from Saccharomyces cerevisiae (strain ATCC 204508 / S288c) (Baker's yeast).